A 275-amino-acid chain; its full sequence is Large ribosomal subunit protein uL2 (275 aa).

Residues 223–260 are disordered; sequence VAMNPVDHPHGGGEGRTSGGRHPVSPWGLPTKGYKTRS.

It belongs to the universal ribosomal protein uL2 family. As to quaternary structure, part of the 50S ribosomal subunit. Forms a bridge to the 30S subunit in the 70S ribosome.

Functionally, one of the primary rRNA binding proteins. Required for association of the 30S and 50S subunits to form the 70S ribosome, for tRNA binding and peptide bond formation. It has been suggested to have peptidyltransferase activity; this is somewhat controversial. Makes several contacts with the 16S rRNA in the 70S ribosome. The chain is Large ribosomal subunit protein uL2 from Legionella pneumophila (strain Paris).